A 374-amino-acid polypeptide reads, in one-letter code: Putative 2,3-diketo-5-methylthiopentyl-1-phosphate enolase (374 aa).

Residues Lys-138, 164–167 (QDDE), His-255, Gly-327, and 349–350 (GG) each bind substrate. Asp-166 serves as a coordination point for Mg(2+).

It belongs to the RuBisCO large chain family. Type IV subfamily. Homodimer. The cofactor is Mg(2+).

It catalyses the reaction 5-methylsulfanyl-2,3-dioxopentyl phosphate = 2-hydroxy-5-methylsulfanyl-3-oxopent-1-enyl phosphate. Its pathway is amino-acid biosynthesis; L-methionine biosynthesis via salvage pathway; L-methionine from S-methyl-5-thio-alpha-D-ribose 1-phosphate: step 3/6. Functionally, catalyzes the enolization of 2,3-diketo-5-methylthiopentyl-1-phosphate (DK-MTP-1-P) into 2-hydroxy-3-keto-5-methylthiopentenyl-1-phosphate (HK-MTPenyl-1-P). The sequence is that of Putative 2,3-diketo-5-methylthiopentyl-1-phosphate enolase (mtnW) from Shouchella clausii (strain KSM-K16) (Alkalihalobacillus clausii).